The following is a 275-amino-acid chain: 18S rRNA (guanine(1575)-N(7))-methyltransferase (275 aa).

The interval 256 to 275 (RGRKVAKDSKFTGRKRRHRF) is disordered. A Nuclear localization signal motif is present at residues 257–264 (GRKVAKDS).

It belongs to the class I-like SAM-binding methyltransferase superfamily. BUD23/WBSCR22 family. Interacts with TRM112. Interacts with ECM16.

It is found in the cytoplasm. It localises to the nucleus. The enzyme catalyses guanosine(1575) in yeast 18S rRNA + S-adenosyl-L-methionine = N(7)-methylguanosine(1575) in yeast 18S rRNA + S-adenosyl-L-homocysteine. Its function is as follows. S-adenosyl-L-methionine-dependent methyltransferase that specifically methylates the N(7) position of guanine 1575 (m7G1575) in 18S rRNA. Requires the methyltransferase adapter protein TRM112 for full rRNA methyltransferase activity. Important for biogenesis end export of the 40S ribosomal subunit independent on its methyltransferase activity. Required for efficient cleavage of the primary 35S precursor rRNA at site A2. Involved in positioning the proximal bud pole signal. This Saccharomyces cerevisiae (strain ATCC 204508 / S288c) (Baker's yeast) protein is 18S rRNA (guanine(1575)-N(7))-methyltransferase (BUD23).